Consider the following 273-residue polypeptide: Outer surface protein A (273 aa).

The N-terminal stretch at 1–16 is a signal peptide; sequence MKKYLLGIGLILALIA. Cys-17 carries N-palmitoyl cysteine lipidation. Cys-17 carries S-diacylglycerol cysteine lipidation.

This sequence belongs to the OspA lipoprotein family.

The protein localises to the cell outer membrane. Its subcellular location is the cell surface. Induces host (human and mouse) cytokine release by monocyte cell lines via TLR2 and CD14; nonlipidated protein does not stimulate host cells. In Borreliella burgdorferi (strain ATCC 35210 / DSM 4680 / CIP 102532 / B31) (Borrelia burgdorferi), this protein is Outer surface protein A.